We begin with the raw amino-acid sequence, 245 residues long: Sec-independent protein translocase protein TatC (245 aa).

The next 6 membrane-spanning stretches (helical) occupy residues 17-37 (FISVACIVVMFIVCFALRSYI), 73-93 (FFAAFIFSLPVIFWQFWKFVA), 107-127 (FVSFASIMFAFGACFCYFVVV), 159-179 (VVVAFGLAFEMPVIAFFFAKI), 191-207 (FRIAVLVIFVFSAFMTP), and 210-230 (VLSQFLMAGPLCGLYGLSILI).

The protein belongs to the TatC family. As to quaternary structure, the Tat system comprises two distinct complexes: a TatABC complex, containing multiple copies of TatA, TatB and TatC subunits, and a separate TatA complex, containing only TatA subunits. Substrates initially bind to the TatABC complex, which probably triggers association of the separate TatA complex to form the active translocon.

The protein localises to the cell inner membrane. Its function is as follows. Part of the twin-arginine translocation (Tat) system that transports large folded proteins containing a characteristic twin-arginine motif in their signal peptide across membranes. Together with TatB, TatC is part of a receptor directly interacting with Tat signal peptides. This chain is Sec-independent protein translocase protein TatC, found in Campylobacter jejuni subsp. jejuni serotype O:2 (strain ATCC 700819 / NCTC 11168).